Here is a 109-residue protein sequence, read N- to C-terminus: Spermidine export protein MdtI (109 aa).

The next 4 helical transmembrane spans lie at 6–26, 36–56, 64–84, and 88–108; these read FYPIAFLILAVMLEIVANILL, WLGILSLLSVLGAFSALAQAV, AYAMWGGFGIAATVAAGWILF, and LNYKGWIGLILLLAGMVMIKL.

It belongs to the drug/metabolite transporter (DMT) superfamily. Small multidrug resistance (SMR) (TC 2.A.7.1) family. MdtI subfamily. As to quaternary structure, forms a complex with MdtJ.

The protein localises to the cell inner membrane. Its function is as follows. Catalyzes the excretion of spermidine. In Yersinia pseudotuberculosis serotype I (strain IP32953), this protein is Spermidine export protein MdtI.